A 172-amino-acid chain; its full sequence is Protein-export protein SecB (172 aa).

It belongs to the SecB family. In terms of assembly, homotetramer, a dimer of dimers. One homotetramer interacts with 1 SecA dimer.

It is found in the cytoplasm. Functionally, one of the proteins required for the normal export of preproteins out of the cell cytoplasm. It is a molecular chaperone that binds to a subset of precursor proteins, maintaining them in a translocation-competent state. It also specifically binds to its receptor SecA. In Cupriavidus pinatubonensis (strain JMP 134 / LMG 1197) (Cupriavidus necator (strain JMP 134)), this protein is Protein-export protein SecB.